A 277-amino-acid polypeptide reads, in one-letter code: MQRKSNFRDVFYVSDGTAITSETLGHAVLGQFPIEIHQTTHPFIETNERAKQVKTLVNQSHEKTGIKPLVFYSIVIPDVKVIIEQSNAHFYDVLNVLVEPLKHDLQLEPEPQLQRSHSINKDAASYQDRIAAIEYTLAHDDGISLNNLDQADVILLGVSRCGKTPTSLYLAMQFGIRAVNYPFIAEDMASLKLPAAIEPYRFKTYGLTIDIERLVAIRNERYANSDYASLEQCEKELHKVEGMFRREAIPYLNTSSLSVEEIATRLLDISGLKRKMC.

157 to 164 is a binding site for ADP; the sequence is GVSRCGKT.

The protein belongs to the pyruvate, phosphate/water dikinase regulatory protein family. PSRP subfamily.

It carries out the reaction [pyruvate, water dikinase] + ADP = [pyruvate, water dikinase]-phosphate + AMP + H(+). It catalyses the reaction [pyruvate, water dikinase]-phosphate + phosphate + H(+) = [pyruvate, water dikinase] + diphosphate. Functionally, bifunctional serine/threonine kinase and phosphorylase involved in the regulation of the phosphoenolpyruvate synthase (PEPS) by catalyzing its phosphorylation/dephosphorylation. This chain is Putative phosphoenolpyruvate synthase regulatory protein, found in Photobacterium profundum (strain SS9).